We begin with the raw amino-acid sequence, 264 residues long: MMNVGQWLTRVRKESPLVHNMTNVVVTNFVANGLLAVGASPVMAYAKEEVADMVRLARALVLNIGTLNETDVEAMLIAGKAANEANIPVIFDPVGAGATAYRTETARRILREVNISILRGNASEIASIAGEQVRTKGVDAGDVQSDLVDVAKKAAHMFRCVVVITGKDDIVTDGERIVIVSNGDAMLTKVTGTGCLLSSVLGAFAGVGEDVMTSSVAALAYYGVAAEKAATQAKAPGSFQLSFLNALHETSAEEVDQYARIQGE.

Methionine 43 is a binding site for substrate. ATP is bound by residues arginine 119 and threonine 165. Residue glycine 192 participates in substrate binding.

Belongs to the Thz kinase family. Mg(2+) is required as a cofactor.

It catalyses the reaction 5-(2-hydroxyethyl)-4-methylthiazole + ATP = 4-methyl-5-(2-phosphooxyethyl)-thiazole + ADP + H(+). Its pathway is cofactor biosynthesis; thiamine diphosphate biosynthesis; 4-methyl-5-(2-phosphoethyl)-thiazole from 5-(2-hydroxyethyl)-4-methylthiazole: step 1/1. Functionally, catalyzes the phosphorylation of the hydroxyl group of 4-methyl-5-beta-hydroxyethylthiazole (THZ). The sequence is that of Hydroxyethylthiazole kinase from Anoxybacillus flavithermus (strain DSM 21510 / WK1).